A 342-amino-acid chain; its full sequence is Endoplasmic reticulum junction formation protein lunapark-1 (342 aa).

Residues 1 to 39 lie on the Cytoplasmic side of the membrane; sequence MGNLFSRNKSPATELERVALSIDDLKKRLQTISSSNTNT. Residues 13 to 34 adopt a coiled-coil conformation; it reads TELERVALSIDDLKKRLQTISS. Residues 40–60 traverse the membrane as a helical segment; the sequence is LYYYYMSIVVILSIAMAHTWL. Over 61-68 the chain is Lumenal; it reads RFEDPQKT. The chain crosses the membrane as a helical span at residues 69–89; sequence YVACALMLGAIGIVLAGRYVI. Over 90–342 the chain is Cytoplasmic; sequence NGFFSWRTNR…ESKTMETEFH (253 aa). Residues 102–136 are a coiled coil; it reads QKLENAISQKTTLLDLVKETLKFKEAKEILDRYEK. Residues 161 to 191 are disordered; it reads ADSSMFATPKQEQKRVETPTAQGPNSAMNSM. Residues 179–191 are compositionally biased toward polar residues; it reads PTAQGPNSAMNSM. The C4-type; plays a role in ER morphology zinc-finger motif lies at 236–261; that stretch reads CSICHTHNGMSTPAEYPYISFRCFEC. The interval 278–342 is disordered; that stretch reads RPPMGPKGIQ…ESKTMETEFH (65 aa). Over residues 295-321 the composition is skewed to polar residues; sequence SENTHNMMENQKPSTDLTPSASQNGSE. The segment covering 322-342 has biased composition (basic and acidic residues); that stretch reads KGSDSENEKVPESKTMETEFH.

This sequence belongs to the lunapark family. Expressed in cell bodies along the ventral cord around the pharynx and the tail both in larvae and adults. Also expressed in muscles and hypodermal cells.

Its subcellular location is the endoplasmic reticulum membrane. Functionally, plays a role in tubular endoplasmic reticulum network formation and maintenance. May be involved in central nervous system development. Has a presynaptic role in neurotransmission. Likely to operate in synaptogenesis by regulating vesicular transport or localization. Required for correct localization of rab-3 and snb-1. This Caenorhabditis elegans protein is Endoplasmic reticulum junction formation protein lunapark-1 (lnp-1).